The following is a 554-amino-acid chain: DNA ligase B (554 aa).

Residue K122 is the N6-AMP-lysine intermediate of the active site.

Belongs to the NAD-dependent DNA ligase family. LigB subfamily.

The catalysed reaction is NAD(+) + (deoxyribonucleotide)n-3'-hydroxyl + 5'-phospho-(deoxyribonucleotide)m = (deoxyribonucleotide)n+m + AMP + beta-nicotinamide D-nucleotide.. Catalyzes the formation of phosphodiester linkages between 5'-phosphoryl and 3'-hydroxyl groups in double-stranded DNA using NAD as a coenzyme and as the energy source for the reaction. The polypeptide is DNA ligase B (Pseudomonas fluorescens (strain SBW25)).